Consider the following 340-residue polypeptide: Ribosomal RNA small subunit methyltransferase C (340 aa).

Belongs to the methyltransferase superfamily. RsmC family. In terms of assembly, monomer.

The protein resides in the cytoplasm. It catalyses the reaction guanosine(1207) in 16S rRNA + S-adenosyl-L-methionine = N(2)-methylguanosine(1207) in 16S rRNA + S-adenosyl-L-homocysteine + H(+). Specifically methylates the guanine in position 1207 of 16S rRNA in the 30S particle. This is Ribosomal RNA small subunit methyltransferase C from Vibrio vulnificus (strain CMCP6).